We begin with the raw amino-acid sequence, 256 residues long: MDRLDFSIKLLRKVGHLLMIHWGRVDNVEKKTGFKDIVTEIDREAQRMIVDEIRKFFPDENIMAEEGIFEKGDRLWIIDPIDGTINFVHGLPNFSISLAYVENGEVKLGVVHAPALNETLYAEEGSGAFFNGERIRVSENASLEECVGSTGSYVDFTGKFIERMEKRTRRIRILGSAALNAAYVGAGRVDFFVTWRINPWDIAAGLIIVKEAGGMVTDFSGKEANAFSKNFIFSNGLIHDEVVKVVNEVVEEIGGK.

Mg(2+)-binding residues include Glu65, Asp79, Ile81, and Asp82. Substrate contacts are provided by residues 82–84 (DGT), Arg172, Ala177, and Arg196. Asp201 contributes to the Mg(2+) binding site.

It belongs to the inositol monophosphatase superfamily. FBPase class 4 family. As to quaternary structure, homotetramer. Requires Mg(2+) as cofactor.

The catalysed reaction is beta-D-fructose 1,6-bisphosphate + H2O = beta-D-fructose 6-phosphate + phosphate. It catalyses the reaction a myo-inositol phosphate + H2O = myo-inositol + phosphate. In contrast to mammalian I-1-P phosphatases, is only weakly inhibited by Li(+), since 50% inhibitory concentration for Li(+) is about 100 mM, and the Li(+) concentration required to totally abolish I-1-Pase activity is 1 M. Phosphatase with broad specificity; it can dephosphorylate fructose 1,6-bisphosphate, both D and L isomers of inositol-1-phosphate (I-1-P) but displaying a 20-fold higher rate of hydrolysis of D-I-1-P than of the L isomer, 2'-AMP, pNPP, inositol-2-phosphate, beta-glycerol phosphate, and alpha-D-glucose-1-phosphate. Cannot hydrolyze glucose-6-phosphate, fructose-6-phosphate, 5'-AMP and NAD(+). May be involved in the biosynthesis of a unique osmolyte, di-myo-inositol 1,1-phosphate. The chain is Fructose-1,6-bisphosphatase/inositol-1-monophosphatase (suhB) from Thermotoga maritima (strain ATCC 43589 / DSM 3109 / JCM 10099 / NBRC 100826 / MSB8).